The chain runs to 320 residues: Cytochrome f (320 aa).

Residues 1-35 (MQTKNTFSWIKKEIIRSISVSLMIYIIARTSISNA) form the signal peptide. Residues Tyr-36, Cys-56, Cys-59, and His-60 each contribute to the heme site. A helical membrane pass occupies residues 286-306 (VQGLLFFLASVILAQIFLVLK).

This sequence belongs to the cytochrome f family. The 4 large subunits of the cytochrome b6-f complex are cytochrome b6, subunit IV (17 kDa polypeptide, petD), cytochrome f and the Rieske protein, while the 4 small subunits are PetG, PetL, PetM and PetN. The complex functions as a dimer. It depends on heme as a cofactor.

Its subcellular location is the plastid. It is found in the chloroplast thylakoid membrane. Component of the cytochrome b6-f complex, which mediates electron transfer between photosystem II (PSII) and photosystem I (PSI), cyclic electron flow around PSI, and state transitions. The polypeptide is Cytochrome f (Eucalyptus globulus subsp. globulus (Tasmanian blue gum)).